A 259-amino-acid chain; its full sequence is Dolichol-phosphate mannosyltransferase subunit 1 (259 aa).

A2 is subject to N-acetylalanine. S3 is subject to Phosphoserine. P31, Y33, E35, I62, D64, D117, A118, D119, R146, R233, and K239 together coordinate GDP-alpha-D-mannose. D119 lines the Mg(2+) pocket. Residue D119 coordinates Mn(2+).

This sequence belongs to the glycosyltransferase 2 family. Component of the dolichol-phosphate mannose (DPM) synthase complex composed of DPM1, DPM2 and DPM3; within the complex, directly interacts with DPM3. This interaction may stabilize DPM1. Requires Mg(2+) as cofactor. Mn(2+) serves as cofactor. The cofactor is Ca(2+).

The protein resides in the endoplasmic reticulum. It carries out the reaction a di-trans,poly-cis-dolichyl phosphate + GDP-alpha-D-mannose = a di-trans,poly-cis-dolichyl beta-D-mannosyl phosphate + GDP. Its pathway is protein modification; protein glycosylation. In terms of biological role, transfers mannose from GDP-mannose to dolichol monophosphate to form dolichol phosphate mannose (Dol-P-Man) which is the mannosyl donor in pathways leading to N-glycosylation, glycosyl phosphatidylinositol membrane anchoring, and O-mannosylation of proteins; catalytic subunit of the dolichol-phosphate mannose (DPM) synthase complex. The chain is Dolichol-phosphate mannosyltransferase subunit 1 (DPM1) from Sus scrofa (Pig).